The following is a 185-amino-acid chain: Threonylcarbamoyl-AMP synthase (185 aa).

One can recognise a YrdC-like domain in the interval methionine 1 to glycine 185. The interval glutamate 163–glycine 185 is disordered. The span at threonine 164–lysine 177 shows a compositional bias: basic and acidic residues.

The protein belongs to the SUA5 family. TsaC subfamily.

It localises to the cytoplasm. The enzyme catalyses L-threonine + hydrogencarbonate + ATP = L-threonylcarbamoyladenylate + diphosphate + H2O. Its function is as follows. Required for the formation of a threonylcarbamoyl group on adenosine at position 37 (t(6)A37) in tRNAs that read codons beginning with adenine. Catalyzes the conversion of L-threonine, HCO(3)(-)/CO(2) and ATP to give threonylcarbamoyl-AMP (TC-AMP) as the acyladenylate intermediate, with the release of diphosphate. The chain is Threonylcarbamoyl-AMP synthase from Vibrio parahaemolyticus serotype O3:K6 (strain RIMD 2210633).